Consider the following 539-residue polypeptide: 4-coumarate--CoA ligase 5 (539 aa).

Ser185, Ser186, Gly187, Thr188, Thr189, and Lys193 together coordinate ATP. (E)-4-coumaroyl-AMP is bound by residues Tyr235 and Ser239. Arg256 is a CoA binding site. The SBD1 stretch occupies residues 258-327 (DTVKMLQLVE…AKLPNAVLGQ (70 aa)). Residues Ala305, Gln327, Gly328, Thr332, and Met340 each contribute to the (E)-4-coumaroyl-AMP site. Gln327, Gly328, and Thr332 together coordinate ATP. Positions 328–395 (GYGMTEAGPV…IRGKQIMKGY (68 aa)) are SBD2. Residues Asp416 and Arg431 each coordinate ATP. Positions 433 and 437 each coordinate (E)-4-coumaroyl-AMP. CoA contacts are provided by Lys439 and Gly440. Lys522 contributes to the ATP binding site.

It belongs to the ATP-dependent AMP-binding enzyme family. Requires Mg(2+) as cofactor. Expressed in roots, stems, leaf blades, leaf sheaths and spikelets.

It catalyses the reaction (E)-ferulate + ATP + CoA = (E)-feruloyl-CoA + AMP + diphosphate. It carries out the reaction (E)-4-coumarate + ATP + CoA = (E)-4-coumaroyl-CoA + AMP + diphosphate. The enzyme catalyses (E)-sinapate + ATP + CoA = (E)-sinapoyl-CoA + AMP + diphosphate. The catalysed reaction is (E)-caffeate + ATP + CoA = (E)-caffeoyl-CoA + AMP + diphosphate. It catalyses the reaction (E)-cinnamate + ATP + CoA = (E)-cinnamoyl-CoA + AMP + diphosphate. It carries out the reaction (E)-ferulate + ATP + H(+) = (E)-feruloyl-AMP + diphosphate. The enzyme catalyses (E)-feruloyl-AMP + CoA = (E)-feruloyl-CoA + AMP + H(+). The catalysed reaction is (E)-4-coumarate + ATP + H(+) = (E)-4-coumaroyl-AMP + diphosphate. It catalyses the reaction (E)-4-coumaroyl-AMP + CoA = (E)-4-coumaroyl-CoA + AMP + H(+). It carries out the reaction (E)-sinapate + ATP + H(+) = (E)-sinapoyl-AMP + diphosphate. The enzyme catalyses (E)-sinapoyl-AMP + CoA = (E)-sinapoyl-CoA + AMP + H(+). The catalysed reaction is (E)-caffeate + ATP + H(+) = (E)-caffeoyl-AMP + diphosphate. It catalyses the reaction (E)-caffeoyl-AMP + CoA = (E)-caffeoyl-CoA + AMP + H(+). The protein operates within phytoalexin biosynthesis; 3,4',5-trihydroxystilbene biosynthesis; 3,4',5-trihydroxystilbene from trans-4-coumarate: step 1/2. Its function is as follows. Involved in the phenylpropanoid metabolism by mediating the activation of a number of hydroxycinnamates for the biosynthesis of monolignols and other phenolic secondary metabolites. Catalyzes the formation of CoA esters of cinnamate, 4-coumarate, caffeate and ferulate. Is also able to convert sinapate to its corresponding CoA ester, a reaction that is rarely observed in 4CL catalysis. Is more efficient with substrates in the following order: ferulate &gt; 4-coumarate &gt; sinapate &gt; caffeate &gt; cinnamate. Follows a two-step reaction mechanism, wherein the carboxylate substrate first undergoes adenylation by ATP, followed by a thioesterification in the presence of CoA to yield the final CoA thioesters. The chain is 4-coumarate--CoA ligase 5 from Oryza sativa subsp. japonica (Rice).